The primary structure comprises 29 residues: Cyclotide mech-3 (29 aa).

Residues 1-29 (GLPTCGETCTLGKCNTPKCTCNWPICYKN) constitute a cross-link (cyclopeptide (Gly-Asn)). Cystine bridges form between Cys5–Cys19, Cys9–Cys21, and Cys14–Cys26.

Post-translationally, this is a cyclic peptide. Contains 3 disulfide bonds.

In terms of biological role, probably participates in a plant defense mechanism (Potential). Binds to and induces leakage in phospholipd membranes, particularly ones containing 1-palmitoyl-2-oleophosphatidylethanolamine (POPE). In vitro, displays cytotoxicity against cultured cells but no hemolytic activity towards fresh erythrocytes. The chain is Cyclotide mech-3 from Melicytus chathamicus (Chatham Island mahoe).